A 427-amino-acid chain; its full sequence is Serine hydroxymethyltransferase (427 aa).

(6S)-5,6,7,8-tetrahydrofolate is bound at residue 120 to 122 (GHI). Residue lysine 226 is modified to N6-(pyridoxal phosphate)lysine. Glutamate 243 lines the (6S)-5,6,7,8-tetrahydrofolate pocket.

The protein belongs to the SHMT family. As to quaternary structure, homodimer. The cofactor is pyridoxal 5'-phosphate.

The protein localises to the cytoplasm. Its pathway is amino-acid biosynthesis; glycine biosynthesis; glycine from L-serine: step 1/1. Catalyzes the reversible interconversion of serine and glycine with a modified folate serving as the one-carbon carrier. Also exhibits a pteridine-independent aldolase activity toward beta-hydroxyamino acids, producing glycine and aldehydes, via a retro-aldol mechanism. This chain is Serine hydroxymethyltransferase, found in Thermococcus gammatolerans (strain DSM 15229 / JCM 11827 / EJ3).